Consider the following 202-residue polypeptide: Securin (202 aa).

Ala2 carries the post-translational modification N-acetylalanine. The segment at 35–94 (LDGRSQVSTPRFGKTFDAPPALPKATRKALGTVNRATEKSVKTKGPLKQKQPSFSAKKMT) is disordered. Positions 61–64 (RKAL) match the D-box motif. Short sequence motifs (TEK-box) lie at residues 71-73 (TEK) and 94-96 (TEK). Residues 163–173 (PPSPVRMPSPP) carry the SH3-binding motif. Ser165 is modified (phosphoserine; by CDK1).

The protein belongs to the securin family. Interacts with RPS10 and DNAJA1. Interacts with the caspase-like ESPL1, and prevents its protease activity probably by covering its active site. Interacts with TP53 and blocks its activity probably by blocking its binding to DNA. Interacts with the Ku 70 kDa subunit of ds-DNA kinase. Interacts with PTTG1IP. Post-translationally, phosphorylated at Ser-165 by CDK1 during mitosis. In terms of processing, phosphorylated in vitro by ds-DNA kinase. Ubiquitinated through 'Lys-11' linkage of ubiquitin moieties by the anaphase promoting complex (APC) at the onset of anaphase, conducting to its degradation. 'Lys-11'-linked ubiquitination is mediated by the E2 ligase UBE2C/UBCH10.

Its subcellular location is the cytoplasm. It localises to the nucleus. Functionally, regulatory protein, which plays a central role in chromosome stability, in the p53/TP53 pathway, and DNA repair. Probably acts by blocking the action of key proteins. During the mitosis, it blocks Separase/ESPL1 function, preventing the proteolysis of the cohesin complex and the subsequent segregation of the chromosomes. At the onset of anaphase, it is ubiquitinated, conducting to its destruction and to the liberation of ESPL1. Its function is however not limited to a blocking activity, since it is required to activate ESPL1. Negatively regulates the transcriptional activity and related apoptosis activity of TP53. The negative regulation of TP53 may explain the strong transforming capability of the protein when it is overexpressed. May also play a role in DNA repair via its interaction with Ku, possibly by connecting DNA damage-response pathways with sister chromatid separation. This chain is Securin (PTTG1), found in Gorilla gorilla gorilla (Western lowland gorilla).